The chain runs to 938 residues: MEVCCCSTSSAVPGRRFAAAGAAAAAVAARWGAVGVGRAVVLAHPLRPAPRGGHAHAQQAGARRARRAVVRAVFERFTERAVKAVVLSQREAKGLGEGAVAPRHLLLGLIAEDRSAGGFLSSGINIERAREECRGIGARDLTPGAPSPSGSGLEMDIPFSGSCKRVFEVAVEFSRNMGCSFISPEHLALALFTLDDPTTNSLLRSLGADPSQLASVALTRLQAELAKDCREPAGASSFKVPKKSPAGAGRSAFSKSLNSKKEKGALDQFCLDLTTQASGGFIDPIIGREEEIERVVQIICRRTKNNPILLGEAGVGKTAIAEGLALRIANGDVPIYLVAKRIMSLDVGLLIAGAKERGELESRVTSLIREVREAGDVILFIDEVHNLIGSGTVGKGKGAGLDIGNLLKPPLARGELQCIAATTLDEHRMHFEKDKALARRFQPVLVEEPSQDDAVKILLGLREKYETYHKCKFTLEAINAAVYLSARYIPDRQLPDKAIDLIDEAGSRARMESFNRKKEGQSSILLKSPDEYWQEIRAAQNMHEVVSSNQMKYSPRQENGSAAIKAPSEDMNELTSELQVEEPIVVGTEEIARVASLWSGIPVQQLTADDRKLLVGLDGELRKRVIGQDDAVMAISRAVKRSRVGLNDPDRPIATLLFCGPTGVGKTELTKALAASYFGSESAMLRLDMSEYMERHTVSKLIGSPPGYIGYGETGTLTEAVRRKPFTVVLLDEIEKAHPDIFNILLQIFEDGHLSDSQGRRVSFKNTLIVMTSNIGSTSISKGRRSMGFMTEDTESSSYVAMKSLVMEELKAFFRPELLNRIDEMVVFRPLEKTQMLAILDIILQEVKGRLLALGIGLEVSDAMKDLICEEGYDKSYGARPLRRAVTHLIEDVISEAILFGEYKPGDTILMDIDAGGKLCMSHLNEKVVQLSDPTRTF.

A chloroplast-targeting transit peptide spans 1–83 (MEVCCCSTSS…FERFTERAVK (83 aa)). 2 repeat regions span residues 84 to 145 (AVVL…TPGA) and 159 to 224 (FSGS…LQAE). The Clp R domain maps to 84 to 224 (AVVLSQREAK…SVALTRLQAE (141 aa)). Residues 234-255 (GASSFKVPKKSPAGAGRSAFSK) are disordered. Positions 266–519 (LDQFCLDLTT…RMESFNRKKE (254 aa)) are i. Residues 311–318 (GEAGVGKT) and 660–667 (GPTGVGKT) each bind ATP. The tract at residues 586 to 777 (VGTEEIARVA…LIVMTSNIGS (192 aa)) is II.

It belongs to the ClpA/ClpB family. ClpD subfamily. In terms of tissue distribution, expressed in stems, culms and leaves.

It is found in the plastid. The protein localises to the chloroplast. Molecular chaperone that may function in heat stress response. May interact with a ClpP-like protease involved in degradation of denatured proteins in the chloroplast. Chaperone involved in response to abiotic stresses. Plays a positive role during dehydration and salt stress. This is Chaperone protein ClpD1, chloroplastic from Oryza sativa subsp. japonica (Rice).